A 564-amino-acid polypeptide reads, in one-letter code: ATP-dependent RNA helicase ROK1 (564 aa).

Disordered regions lie at residues 1–45 and 62–87; these read MDIF…ESQI and EDDREKTTENDSPNKEEKSGNDDGLI. Composition is skewed to basic and acidic residues over residues 13-23, 33-45, and 62-86; these read VKKESGPKAKA, DENHKEDNNESQI, and EDDREKTTENDSPNKEEKSGNDDGL. The Q motif signature appears at 122–150; that stretch reads DLISRFSFDKRLLNNLIENGFTEPTPIQC. A Helicase ATP-binding domain is found at 153 to 333; sequence IPVALNNRDV…QSIMMDPVRV (181 aa). 166–173 contributes to the ATP binding site; it reads GPTGSGKT. The short motif at 280-283 is the DEAD box element; sequence DEAD. In terms of domain architecture, Helicase C-terminal spans 344–506; the sequence is NIEQKLIFCG…EVSEWMDKMA (163 aa). The segment at 512–564 is disordered; the sequence is EKESIKNGKAHKERKQITTVPKMDKAKRRRQQEMIAASKRRKNEELSKKHFSK. The span at 553 to 564 shows a compositional bias: basic and acidic residues; the sequence is KNEELSKKHFSK.

This sequence belongs to the DEAD box helicase family. DDX52/ROK1 subfamily. Interacts with the U3 snoRNA and is associated with the 90S and 40S pre-ribosomes. This association requires the presence of RRP5. Also interacts with OSH3.

It is found in the nucleus. Its subcellular location is the nucleolus. The catalysed reaction is ATP + H2O = ADP + phosphate + H(+). ATP-dependent RNA helicase involved in 40S ribosomal subunit biogenesis. Required for the processing and cleavage of 35S pre-rRNA at sites A0, A1, and A2, leading to mature 18S rRNA. May also have a gene-specific regulatory function since it affects nuclear fusion by regulating KAR4 expression and contributes with KEM1 to ISP-1 sensitivity. The polypeptide is ATP-dependent RNA helicase ROK1 (ROK1) (Saccharomyces cerevisiae (strain ATCC 204508 / S288c) (Baker's yeast)).